The following is a 227-amino-acid chain: Cytochrome c oxidase subunit 2 (227 aa).

Residues 1-14 are Mitochondrial intermembrane-facing; the sequence is MAYPFQLGLQDATS. The helical transmembrane segment at 15-45 threads the bilayer; sequence PIMEELLHFHDHTLMIVFLISSLVLYIISLM. Residues 46–59 lie on the Mitochondrial matrix side of the membrane; it reads LTTKLTHTSTMDAQ. Residues 60 to 87 form a helical membrane-spanning segment; sequence EVETVWTILPAIILILIALPSLRILYMM. The Mitochondrial intermembrane segment spans residues 88-227; that stretch reads DEINNPSLTV…YFETWSALMV (140 aa). Positions 161, 196, 198, 200, 204, and 207 each coordinate Cu cation. A Mg(2+)-binding site is contributed by glutamate 198. The residue at position 218 (tyrosine 218) is a Phosphotyrosine.

The protein belongs to the cytochrome c oxidase subunit 2 family. As to quaternary structure, component of the cytochrome c oxidase (complex IV, CIV), a multisubunit enzyme composed of 14 subunits. The complex is composed of a catalytic core of 3 subunits MT-CO1, MT-CO2 and MT-CO3, encoded in the mitochondrial DNA, and 11 supernumerary subunits COX4I, COX5A, COX5B, COX6A, COX6B, COX6C, COX7A, COX7B, COX7C, COX8 and NDUFA4, which are encoded in the nuclear genome. The complex exists as a monomer or a dimer and forms supercomplexes (SCs) in the inner mitochondrial membrane with NADH-ubiquinone oxidoreductase (complex I, CI) and ubiquinol-cytochrome c oxidoreductase (cytochrome b-c1 complex, complex III, CIII), resulting in different assemblies (supercomplex SCI(1)III(2)IV(1) and megacomplex MCI(2)III(2)IV(2)). Found in a complex with TMEM177, COA6, COX18, COX20, SCO1 and SCO2. Interacts with TMEM177 in a COX20-dependent manner. Interacts with COX20. Interacts with COX16. The cofactor is Cu cation.

The protein resides in the mitochondrion inner membrane. The enzyme catalyses 4 Fe(II)-[cytochrome c] + O2 + 8 H(+)(in) = 4 Fe(III)-[cytochrome c] + 2 H2O + 4 H(+)(out). Component of the cytochrome c oxidase, the last enzyme in the mitochondrial electron transport chain which drives oxidative phosphorylation. The respiratory chain contains 3 multisubunit complexes succinate dehydrogenase (complex II, CII), ubiquinol-cytochrome c oxidoreductase (cytochrome b-c1 complex, complex III, CIII) and cytochrome c oxidase (complex IV, CIV), that cooperate to transfer electrons derived from NADH and succinate to molecular oxygen, creating an electrochemical gradient over the inner membrane that drives transmembrane transport and the ATP synthase. Cytochrome c oxidase is the component of the respiratory chain that catalyzes the reduction of oxygen to water. Electrons originating from reduced cytochrome c in the intermembrane space (IMS) are transferred via the dinuclear copper A center (CU(A)) of subunit 2 and heme A of subunit 1 to the active site in subunit 1, a binuclear center (BNC) formed by heme A3 and copper B (CU(B)). The BNC reduces molecular oxygen to 2 water molecules using 4 electrons from cytochrome c in the IMS and 4 protons from the mitochondrial matrix. The polypeptide is Cytochrome c oxidase subunit 2 (MT-CO2) (Urocyon cinereoargenteus (Gray fox)).